A 3122-amino-acid chain; its full sequence is DNA polymerase zeta catalytic subunit (3122 aa).

Disordered stretches follow at residues 270–289 (QRRR…SQDC), 425–457 (GYQG…NEPQ), 487–509 (LCRN…EMEW), 524–545 (LDGT…RAHS), and 842–886 (TSTK…TFEN). A compositionally biased stretch (polar residues) spans 277–286 (ESSQISQPES). The segment covering 497-509 (EEDDSSSEEEMEW) has biased composition (acidic residues). 2 stretches are compositionally biased toward polar residues: residues 533 to 545 (DNPL…RAHS) and 842 to 860 (TSTK…THND). Ser-1029 carries the phosphoserine modification. 7 disordered regions span residues 1034–1075 (YPIY…TLSF), 1154–1285 (VYNT…PTGI), 1429–1453 (VSVS…ESQT), 1538–1616 (KAQS…LSDD), 1842–1869 (NDVL…SFTP), 1959–1979 (NPRP…ESSN), and 2091–2138 (AAVP…RHSS). Thr-1040 carries the phosphothreonine modification. 2 stretches are compositionally biased toward basic residues: residues 1042–1063 (KKSH…KQHR) and 1166–1179 (KASR…KSKA). Over residues 1215–1239 (RANEKSLSRKHAIPADEKMKPHSEA) the composition is skewed to basic and acidic residues. A compositionally biased stretch (polar residues) spans 1243-1270 (PNHQSVSELTSSSGAQALSKQKEMSQTG). Positions 1429–1440 (VSVSEQSKTSET) are enriched in low complexity. 2 stretches are compositionally biased toward polar residues: residues 1441-1453 (CSPG…ESQT) and 1538-1561 (KAQS…ISVS). Basic residues predominate over residues 1566–1587 (KANKRTRPVTSPRKPRTPRRTK). The span at 1588–1598 (PKEQTPRRLKV) shows a compositional bias: basic and acidic residues. Residues 1602 to 1615 (NLQTSGHLDNSLSD) are compositionally biased toward polar residues. Residues 1844 to 1895 (VLTPTPDSSPRSTSSPLQSKNGSFTPRTAHILKPLMSPPSREEIVATLLDHD) form a mediates interaction with MAD2L2 region. Over residues 1846-1859 (TPTPDSSPRSTSSP) the composition is skewed to low complexity. Residues 1860–1869 (LQSKNGSFTP) show a composition bias toward polar residues. Phosphoserine is present on Ser-1964. Zn(2+) is bound by residues Cys-3034, Cys-3037, Cys-3046, and Cys-3049. The CysA-type zinc-finger motif lies at 3034–3049 (CPVCDDLTQHGICSKC). 4 residues coordinate [4Fe-4S] cluster: Cys-3078, Cys-3081, Cys-3091, and Cys-3096. Residues 3078–3096 (CRNCTGSFDRHIPCVSLNC) carry the CysB motif motif.

The protein belongs to the DNA polymerase type-B family. In terms of assembly, heterodimer with MAD2L2. This dimer forms the minimal DNA polymerase zeta complex (Pol-zeta2), with REV3L bearing DNA polymerase catalytic activity, although its activity is very low in this context. Component of the tetrameric Pol-zeta complex (Pol-zeta4), which consists of REV3L, MAD2L2, POLD2 and POLD3; Pol-zeta4 is the fully active form of DNA polymerase zeta. [4Fe-4S] cluster serves as cofactor.

It localises to the nucleus. The enzyme catalyses DNA(n) + a 2'-deoxyribonucleoside 5'-triphosphate = DNA(n+1) + diphosphate. Functionally, catalytic subunit of the DNA polymerase zeta complex, an error-prone polymerase specialized in translesion DNA synthesis (TLS). Lacks an intrinsic 3'-5' exonuclease activity and thus has no proofreading function. The polypeptide is DNA polymerase zeta catalytic subunit (Rev3l) (Mus musculus (Mouse)).